A 595-amino-acid polypeptide reads, in one-letter code: DNA polymerase (595 aa).

The 212-residue stretch at 1 to 212 (MIELRHEVQG…CKSLTPLVPD (212 aa)) folds into the 3'-5' exonuclease domain. The segment at 213–595 (VSRSLVPYEH…SWGSLYGADY (383 aa)) is polymerase.

The protein belongs to the DNA polymerase type-A family.

The catalysed reaction is DNA(n) + a 2'-deoxyribonucleoside 5'-triphosphate = DNA(n+1) + diphosphate. Its function is as follows. Replicates viral genomic DNA. This polymerase possesses two enzymatic activities: DNA synthesis (polymerase) and an exonucleolytic activity that degrades single-stranded DNA in the 3'-5' direction. The protein is DNA polymerase (44) of Mycobacterium phage L5 (Mycobacteriophage L5).